The sequence spans 560 residues: uncharacterized protein (560 aa).

5 consecutive transmembrane segments (helical) span residues 9–29 (LVITILLIVLGANWLLSSFLL), 61–81 (ILVPTGFPLTTGLGLSLKYKI), 136–156 (IGIANSIATVEGFTLSLASMM), 305–325 (SLQIWGKLFAVLLHGGSASFI), and 442–462 (VVLELYCPYAIMGPVAHTNFY).

It is found in the membrane. This is an uncharacterized protein from Saccharomyces cerevisiae (strain ATCC 204508 / S288c) (Baker's yeast).